Here is a 603-residue protein sequence, read N- to C-terminus: Carbon catabolite repressor protein 4 homolog 2 (603 aa).

The disordered stretch occupies residues 115–136; sequence ENNANEDDDLNRNNSAGSGSLA. Residues 126-136 are compositionally biased toward low complexity; the sequence is RNNSAGSGSLA. A Mg(2+)-binding site is contributed by Glu302.

This sequence belongs to the CCR4/nocturin family. Component of the CCR4-NOT complex, at least composed of CRR4 and CAF1 proteins. It depends on Mg(2+) as a cofactor.

It is found in the nucleus. It localises to the cytoplasm. It catalyses the reaction Exonucleolytic cleavage of poly(A) to 5'-AMP.. Functionally, acts as a catalytic component of the CCR4-NOT core complex, which in the nucleus seems to be a general transcription factor, and in the cytoplasm the major mRNA deadenylase involved in mRNA turnover. The protein is Carbon catabolite repressor protein 4 homolog 2 (CCR4-2) of Arabidopsis thaliana (Mouse-ear cress).